The primary structure comprises 811 residues: Probable disease resistance protein At5g04720 (811 aa).

The 147-residue stretch at M1 to G147 folds into the RPW8 domain. NB-ARC domains are found at residues V180–S242 and T312–V437. G207–T214 serves as a coordination point for ATP. LRR repeat units follow at residues F650–I674, S676–K699, A700–L722, R724–V746, and T748–L769.

This sequence belongs to the disease resistance NB-LRR family.

Functionally, probable disease resistance protein. The chain is Probable disease resistance protein At5g04720 from Arabidopsis thaliana (Mouse-ear cress).